The following is a 230-amino-acid chain: Aspartate and serine-rich protein (230 aa).

N-linked (GlcNAc...) asparagine glycosylation is found at asparagine 17, asparagine 132, and asparagine 139. Positions 112-230 are disordered; the sequence is LNGGATAGGV…DSDSNDTDSD (119 aa). A compositionally biased stretch (acidic residues) spans 126-140; the sequence is DTDESSNDTDEDSND. Basic and acidic residues predominate over residues 141-161; sequence SDSKDTDSDSKDTDSDSKDSD. Asparagine 163 and asparagine 170 each carry an N-linked (GlcNAc...) asparagine glycan. Over residues 173-223 the composition is skewed to basic and acidic residues; sequence DSKDTDSDSKDSDSKDTDSDSKDTDSDSKDSDSKDTDSDSKDTDSDSKDSD. N-linked (GlcNAc...) asparagine glycosylation is present at asparagine 225.

As to expression, component of the acid-insoluble organic matrix of calcified layers of the shell (at protein level).

The protein resides in the secreted. In Lottia gigantea (Giant owl limpet), this protein is Aspartate and serine-rich protein.